Consider the following 361-residue polypeptide: Mitogen-activated protein kinase 14 (361 aa).

The 285-residue stretch at 25-309 folds into the Protein kinase domain; that stretch reads YQNLTPVGSG…AAEALAHSYF (285 aa). Residues 31–39 and K54 contribute to the ATP site; that span reads VGSGAYGSV. Catalysis depends on D151, which acts as the Proton acceptor. At T181 the chain carries Phosphothreonine. The short motif at 181 to 183 is the TXY element; sequence TGY. Position 183 is a phosphotyrosine (Y183).

Belongs to the protein kinase superfamily. CMGC Ser/Thr protein kinase family. MAP kinase subfamily. Mg(2+) serves as cofactor. Post-translationally, dually phosphorylated on Thr-181 and Tyr-183, which activates the enzyme.

The catalysed reaction is L-seryl-[protein] + ATP = O-phospho-L-seryl-[protein] + ADP + H(+). The enzyme catalyses L-threonyl-[protein] + ATP = O-phospho-L-threonyl-[protein] + ADP + H(+). Activated by tyrosine and threonine phosphorylation. Functionally, serine/threonine kinase which acts as an essential component of the MAP kinase signal transduction pathway. mapk14a is one of the four p38 MAPKs which play an important role in the cascades of cellular responses evoked by extracellular stimuli such as pro-inflammatory cytokines or physical stress leading to direct activation of transcription factors. Accordingly, p38 MAPKs phosphorylate a broad range of proteins and it has been estimated that they may have approximately 200 to 300 substrates each. Some of the targets are downstream kinases which are activated through phosphorylation and further phosphorylate additional targets. MPK2 is activated by upstream MAPKK/MAPKKK and stimulates MAPKAP kinase 2 to phosphorylate small heat shock proteins. Does not phosphorylate myelin basic protein or MAPKAP kinase 1. The protein is Mitogen-activated protein kinase 14 (mapk14) of Xenopus laevis (African clawed frog).